Here is a 553-residue protein sequence, read N- to C-terminus: MVRRTHGNSQEHVTKHIFVTGGVVSSLGKGLTASSLGRLLRSRGIHVLQQKLDPYINVDPGTMNPFQHGEVYVTEDGAETDLDIGHYERFLDVFLSQKANVTTGQIYQEVLRKERAGEYLGQCVQVIPHITNEIKSRMRAQASDDVDVIITEIGGTVGDIESQPFLEAAREVRRDLGPDNCMFVHVSLVPYISAAHELKTKPTQHSVMMLRQLGISPDALVLRSDRPLNQSIKDKISLMCDVDAEGVVNCVDAPSIYDVPKILFEEGLDAYVVRELGLPFHDVDWDEWADLLERVHHPKHEVNIAIVGKYIDLPDAYLSVTEAIKAGGFANWAKVNVKWVAADRCETTEGAAAALDNVDGIVIPGGFGIRGIDGKIGALKFARETKLPALGLCLGLQSMVIEYSRHVLGIEDANSSEFEPDCANPVIATMEEQKDIVAGKGDMGHTMRLGSYPAELEEGSLVAELYGTTHVTERHRHRYEVNVAYKDRLREGGLRISGQSPDGELTEFVELPQDVHPFYVATQAHPEFKSRPTKPHPLFAGLVKAALDHQAAR.

An amidoligase domain region spans residues 1-278 (MVRRTHGNSQ…DAYVVRELGL (278 aa)). Position 25 (Ser25) interacts with CTP. Ser25 lines the UTP pocket. ATP contacts are provided by residues 26-31 (SLGKGL) and Asp83. Positions 83 and 152 each coordinate Mg(2+). Residues 159–161 (DIE), 199–204 (KTKPTQ), and Lys235 contribute to the CTP site. UTP contacts are provided by residues 199–204 (KTKPTQ) and Lys235. One can recognise a Glutamine amidotransferase type-1 domain in the interval 303 to 552 (NIAIVGKYID…VKAALDHQAA (250 aa)). Gly366 is a binding site for L-glutamine. The Nucleophile; for glutamine hydrolysis role is filled by Cys393. L-glutamine-binding positions include 394 to 397 (LGLQ), Glu417, and Arg478. Active-site residues include His525 and Glu527.

Belongs to the CTP synthase family. In terms of assembly, homotetramer.

The catalysed reaction is UTP + L-glutamine + ATP + H2O = CTP + L-glutamate + ADP + phosphate + 2 H(+). It catalyses the reaction L-glutamine + H2O = L-glutamate + NH4(+). It carries out the reaction UTP + NH4(+) + ATP = CTP + ADP + phosphate + 2 H(+). Its pathway is pyrimidine metabolism; CTP biosynthesis via de novo pathway; CTP from UDP: step 2/2. With respect to regulation, allosterically activated by GTP, when glutamine is the substrate; GTP has no effect on the reaction when ammonia is the substrate. The allosteric effector GTP functions by stabilizing the protein conformation that binds the tetrahedral intermediate(s) formed during glutamine hydrolysis. Inhibited by the product CTP, via allosteric rather than competitive inhibition. In terms of biological role, catalyzes the ATP-dependent amination of UTP to CTP with either L-glutamine or ammonia as the source of nitrogen. Regulates intracellular CTP levels through interactions with the four ribonucleotide triphosphates. This chain is CTP synthase, found in Bifidobacterium longum (strain NCC 2705).